We begin with the raw amino-acid sequence, 360 residues long: Malonyl CoA-acyl carrier protein transacylase, mitochondrial (360 aa).

The transit peptide at 1–24 (MKLLTFPGQGTSISISILKAIIRN) directs the protein to the mitochondrion. Active-site residues include serine 105 and histidine 235.

This sequence belongs to the FabD family.

Its subcellular location is the mitochondrion. It catalyses the reaction holo-[ACP] + malonyl-CoA = malonyl-[ACP] + CoA. It participates in lipid metabolism; fatty acid biosynthesis. Functionally, involved in biosynthesis of fatty acids in mitochondria. This is Malonyl CoA-acyl carrier protein transacylase, mitochondrial (MCT1) from Saccharomyces cerevisiae (strain ATCC 204508 / S288c) (Baker's yeast).